The following is a 72-amino-acid chain: V-type proton ATPase subunit e (72 aa).

At 1-2 (MS) the chain is on the lumenal side. The chain crosses the membrane as a helical span at residues 3–23 (FYTVVATFLSVVLASAVFWVL). Over 24 to 34 (APKENQTVWRS) the chain is Cytoplasmic. A helical membrane pass occupies residues 35–55 (TIILSMSMMFLMWAVTYLSQL). Residues 56-72 (HPLVVPRRSDLRPEFAE) are Lumenal-facing.

This sequence belongs to the V-ATPase e1/e2 subunit family. As to quaternary structure, V-ATPase is a heteromultimeric enzyme composed of a peripheral catalytic V1 complex (components A to H) attached to an integral membrane V0 proton pore complex (components: a, c, c', c'', d, e, f and VOA1).

Its subcellular location is the vacuole membrane. Its function is as follows. Subunit of the V0 complex of vacuolar(H+)-ATPase (V-ATPase), a multisubunit enzyme composed of a peripheral complex (V1) that hydrolyzes ATP and a membrane integral complex (V0) that translocates protons. V-ATPase is responsible for acidifying and maintaining the pH of intracellular compartments. This is V-type proton ATPase subunit e (VMA9) from Eremothecium gossypii (strain ATCC 10895 / CBS 109.51 / FGSC 9923 / NRRL Y-1056) (Yeast).